We begin with the raw amino-acid sequence, 221 residues long: Protein Thf1 (221 aa).

Residues 174–213 (TKERVEKDVNLYKSSLDKIEKALELIEMNIKDEKRRNKER) adopt a coiled-coil conformation.

This sequence belongs to the THF1 family.

Functionally, may be involved in photosynthetic membrane biogenesis. The chain is Protein Thf1 from Prochlorococcus marinus (strain MIT 9211).